Reading from the N-terminus, the 507-residue chain is Maturase K (507 aa).

This sequence belongs to the intron maturase 2 family. MatK subfamily.

The protein resides in the plastid. It localises to the chloroplast. Usually encoded in the trnK tRNA gene intron. Probably assists in splicing its own and other chloroplast group II introns. The chain is Maturase K from Kalmia buxifolia (Sand myrtle).